The sequence spans 67 residues: DNA-directed RNA polymerase subunit omega (67 aa).

It belongs to the RNA polymerase subunit omega family. As to quaternary structure, the RNAP catalytic core consists of 2 alpha, 1 beta, 1 beta' and 1 omega subunit. When a sigma factor is associated with the core the holoenzyme is formed, which can initiate transcription.

The catalysed reaction is RNA(n) + a ribonucleoside 5'-triphosphate = RNA(n+1) + diphosphate. Promotes RNA polymerase assembly. Latches the N- and C-terminal regions of the beta' subunit thereby facilitating its interaction with the beta and alpha subunits. This Polynucleobacter asymbioticus (strain DSM 18221 / CIP 109841 / QLW-P1DMWA-1) (Polynucleobacter necessarius subsp. asymbioticus) protein is DNA-directed RNA polymerase subunit omega.